A 237-amino-acid chain; its full sequence is 3-oxoacyl-[acyl-carrier-protein] reductase (237 aa).

Met-1 bears the N-acetylmethionine mark. Residues 11–14 (SRGI), 34–35 (RN), Asp-56, and 83–85 (AAG) each bind NADP(+). Position 135 (Ser-135) interacts with substrate. NADP(+)-binding positions include Tyr-148, Lys-152, and 181–183 (IHT). Tyr-148 serves as the catalytic Proton acceptor. Lys-195 carries the post-translational modification N6-acetyllysine.

Belongs to the short-chain dehydrogenases/reductases (SDR) family. Homotetramer (in vitro). Heterotetramer with HSD17B8; contains two molecules each of HSD17B8 and CBR4. Does not form homotetramers when HSD17B8 is coexpressed, only heterotetramers (in vitro).

It is found in the mitochondrion matrix. It catalyses the reaction a (3R)-hydroxyacyl-[ACP] + NADP(+) = a 3-oxoacyl-[ACP] + NADPH + H(+). It carries out the reaction a quinone + NADPH + H(+) = a quinol + NADP(+). It functions in the pathway lipid metabolism; fatty acid biosynthesis. Functionally, component of the heterotetramer complex KAR (3-ketoacyl-[acyl carrier protein] reductase or 3-ketoacyl-[ACP] reductase) that forms part of the mitochondrial fatty acid synthase (mtFAS). Beta-subunit of the KAR heterotetramer complex, responsible for the 3-ketoacyl-ACP reductase activity of the mtFAS, reduces 3-oxoacyl-[ACP] to (3R)-hydroxyacyl-[ACP] in a NADPH-dependent manner with no chain length preference, thereby participating in mitochondrial fatty acid biosynthesis. The homotetramer has NADPH-dependent quinone reductase activity (in vitro), hence could play a role in protection against cytotoxicity of exogenous quinones. As a heterotetramer, it can also reduce 9,10-phenanthrenequinone, 1,4-benzoquinone and various other o-quinones and p-quinones (in vitro). The chain is 3-oxoacyl-[acyl-carrier-protein] reductase (CBR4) from Bos taurus (Bovine).